Consider the following 587-residue polypeptide: Aspartate--tRNA ligase (587 aa).

Glutamate 174 contacts L-aspartate. The segment at 198–201 (QITK) is aspartate. Arginine 220 lines the L-aspartate pocket. ATP-binding positions include 220-222 (RDE) and glutamine 229. An L-aspartate-binding site is contributed by histidine 443. Glutamate 477 serves as a coordination point for ATP. Arginine 484 serves as a coordination point for L-aspartate. ATP is bound at residue 529–532 (GLDR).

This sequence belongs to the class-II aminoacyl-tRNA synthetase family. Type 1 subfamily. In terms of assembly, homodimer.

The protein resides in the cytoplasm. It carries out the reaction tRNA(Asp) + L-aspartate + ATP = L-aspartyl-tRNA(Asp) + AMP + diphosphate. Catalyzes the attachment of L-aspartate to tRNA(Asp) in a two-step reaction: L-aspartate is first activated by ATP to form Asp-AMP and then transferred to the acceptor end of tRNA(Asp). The sequence is that of Aspartate--tRNA ligase from Streptococcus pneumoniae serotype 19F (strain G54).